Here is a 227-residue protein sequence, read N- to C-terminus: PKHD-type hydroxylase Mfla_2317 (227 aa).

Residues 78-178 enclose the Fe2OG dioxygenase domain; sequence KVFPPLFNRY…RVSSFFWMQS (101 aa). Fe cation is bound by residues His96, Asp98, and His159. Arg169 is a 2-oxoglutarate binding site.

It depends on Fe(2+) as a cofactor. L-ascorbate is required as a cofactor.

In Methylobacillus flagellatus (strain ATCC 51484 / DSM 6875 / VKM B-1610 / KT), this protein is PKHD-type hydroxylase Mfla_2317.